Consider the following 354-residue polypeptide: Type II secretion system protein K (354 aa).

A propeptide spans 1 to 7 (MSRRQRG) (leader sequence). The chain crosses the membrane as a helical span at residues 8–28 (VALLIVMLMLSLMVTIAASIT). Residues 29-354 (ERSGKAWQRT…QYGGYRTVNP (326 aa)) are Periplasmic-facing. Residues 114–151 (NVTPNNASGNNTSGNNNAANGSSGNGNSPQPPKVGTSE) are disordered. Over residues 118–141 (NNASGNNTSGNNNAANGSSGNGNS) the composition is skewed to low complexity.

This sequence belongs to the GSP K family. Type II secretion is composed of four main components: the outer membrane complex, the inner membrane complex, the cytoplasmic secretion ATPase and the periplasm-spanning pseudopilus. Interacts with core component OutG. Cleaved by prepilin peptidase.

It is found in the cell inner membrane. Component of the type II secretion system required for the energy-dependent secretion of extracellular factors such as proteases and toxins from the periplasm. Plays a role in pseudopilus assembly and seems to control its length. Interacts with the pseudopilus tip complex that is critical for the recognition and binding of secretion substrates. This Dickeya chrysanthemi (Pectobacterium chrysanthemi) protein is Type II secretion system protein K (outK).